The sequence spans 900 residues: Probable 2-oxoadipate dehydrogenase complex component E1 homolog (900 aa).

It belongs to the alpha-ketoglutarate dehydrogenase family. Thiamine diphosphate is required as a cofactor.

It is found in the mitochondrion. The enzyme catalyses N(6)-[(R)-lipoyl]-L-lysyl-[protein] + 2-oxoadipate + H(+) = N(6)-[(R)-S(8)-glutaryldihydrolipoyl]-L-lysyl-[protein] + CO2. Functionally, 2-oxoadipate dehydrogenase (E1a) component of the 2-oxoadipate dehydrogenase complex (OADHC). Participates in the first step, rate limiting for the overall conversion of 2-oxoadipate (alpha-ketoadipate) to glutaryl-CoA and CO(2) catalyzed by the whole OADHC. Catalyzes the irreversible decarboxylation of 2-oxoadipate via the thiamine diphosphate (ThDP) cofactor and subsequent transfer of the decarboxylated acyl intermediate on an oxidized dihydrolipoyl group that is covalently amidated to the E2 enzyme (dihydrolipoyllysine-residue succinyltransferase or DLST). The chain is Probable 2-oxoadipate dehydrogenase complex component E1 homolog (odhA) from Dictyostelium discoideum (Social amoeba).